A 168-amino-acid polypeptide reads, in one-letter code: Translationally-controlled tumor protein homolog (168 aa).

Positions 1-168 (MLLYKDVISG…FKDGLVSEKF (168 aa)) constitute a TCTP domain. The residue at position 78 (Ser78) is a Phosphoserine.

This sequence belongs to the TCTP family.

It localises to the cytoplasm. Involved in calcium binding and microtubule stabilization. May be a guanine nucleotide-free chaperone (GFC). This is Translationally-controlled tumor protein homolog (p23fy) from Schizosaccharomyces pombe (strain 972 / ATCC 24843) (Fission yeast).